Consider the following 269-residue polypeptide: CCAAT/enhancer-binding protein delta (269 aa).

Disordered regions lie at residues 1–48, 97–133, and 151–219; these read MSAA…PGAA, PLEL…APGS, and AAGQ…NQEM. Position 2 is an N-acetylserine (serine 2). Low complexity-rich tracts occupy residues 36–48 and 97–107; these read GAEP…PGAA and PLELLPGGPAR. A Glycyl lysine isopeptide (Lys-Gly) (interchain with G-Cter in SUMO) cross-link involves residue lysine 120. A compositionally biased stretch (pro residues) spans 155-175; it reads PTPPTSPEPPRSSPRQTPAPG. Over residues 177-201 the composition is skewed to basic and acidic residues; that stretch reads AREKSAGKRGPDRGSPEYRQRRERN. Residues 191–254 form the bZIP domain; it reads SPEYRQRRER…AGLRQFFKQL (64 aa). The tract at residues 195 to 222 is basic motif; sequence RQRRERNNIAVRKSRDKAKRRNQEMQQK. The tract at residues 226-254 is leucine-zipper; sequence LSAENEKLHQRVEQLTRDLAGLRQFFKQL.

The protein belongs to the bZIP family. C/EBP subfamily. Binds DNA as a homodimer and as a heterodimer. Can form stable heterodimers with CEBPB. Can form stable heterodimers with CEBPA and CEBPE. Directly interacts with SPI1/PU.1; this interaction does not affect DNA-binding properties of each partner. Interacts with PRDM16.

The protein resides in the nucleus. Its function is as follows. Transcription activator that recognizes two different DNA motifs: the CCAAT homology common to many promoters and the enhanced core homology common to many enhancers. Important transcription factor regulating the expression of genes involved in immune and inflammatory responses. Transcriptional activator that enhances IL6 transcription alone and as heterodimer with CEBPB. This is CCAAT/enhancer-binding protein delta (CEBPD) from Homo sapiens (Human).